We begin with the raw amino-acid sequence, 298 residues long: GTP cyclohydrolase FolE2 (298 aa).

Belongs to the GTP cyclohydrolase IV family.

The enzyme catalyses GTP + H2O = 7,8-dihydroneopterin 3'-triphosphate + formate + H(+). Its pathway is cofactor biosynthesis; 7,8-dihydroneopterin triphosphate biosynthesis; 7,8-dihydroneopterin triphosphate from GTP: step 1/1. In terms of biological role, converts GTP to 7,8-dihydroneopterin triphosphate. The protein is GTP cyclohydrolase FolE2 of Azotobacter vinelandii (strain DJ / ATCC BAA-1303).